A 529-amino-acid polypeptide reads, in one-letter code: ADP,ATP carrier protein 1 (529 aa).

12 helical membrane-spanning segments follow: residues 24 to 44, 63 to 83, 93 to 113, 124 to 144, 149 to 169, 184 to 204, 220 to 240, 284 to 304, 322 to 342, 356 to 376, 381 to 401, and 463 to 483; these read LKKVLPMFLMFFCISFNYTIL, IPFIKLWLVVPSAVVFMLIYA, ALFYAVLSPFVVFFALFPLVI, DFADTLQAILPSGFLGFIAML, FAAFYVLSELWGSVMLSLMFW, FYALFGVGANVALLISGPAIV, WGVTLYFLMAMFLCSCAIIAA, YMLLLALLVICYGVCINLVEV, AFMGTFSFWTGVVSVFVMLFI, ALVTPVMVLVTGAIFFALVIF, TGLVAALGTTPLMLAVVVGAV, and ISAMTPFLAVALFAIIMVWLT. Positions 509 to 520 are enriched in low complexity; it reads AAEKEASPAAKE. Residues 509-529 are disordered; it reads AAEKEASPAAKEVSPAIEGVS.

The protein belongs to the ADP/ATP translocase tlc family.

The protein resides in the cell membrane. The sequence is that of ADP,ATP carrier protein 1 (tlcA) from Chlamydia muridarum (strain MoPn / Nigg).